Consider the following 498-residue polypeptide: ATP synthase subunit beta, chloroplastic (498 aa).

172–179 (GGAGVGKT) contacts ATP.

Belongs to the ATPase alpha/beta chains family. F-type ATPases have 2 components, CF(1) - the catalytic core - and CF(0) - the membrane proton channel. CF(1) has five subunits: alpha(3), beta(3), gamma(1), delta(1), epsilon(1). CF(0) has four main subunits: a(1), b(1), b'(1) and c(9-12).

It is found in the plastid. The protein resides in the chloroplast thylakoid membrane. It catalyses the reaction ATP + H2O + 4 H(+)(in) = ADP + phosphate + 5 H(+)(out). Produces ATP from ADP in the presence of a proton gradient across the membrane. The catalytic sites are hosted primarily by the beta subunits. The chain is ATP synthase subunit beta, chloroplastic from Nicotiana sylvestris (Wood tobacco).